The primary structure comprises 180 residues: Large ribosomal subunit protein uL5 (180 aa).

Belongs to the universal ribosomal protein uL5 family. As to quaternary structure, part of the 50S ribosomal subunit; part of the 5S rRNA/L5/L18/L25 subcomplex. Contacts the 5S rRNA and the P site tRNA. Forms a bridge to the 30S subunit in the 70S ribosome.

This is one of the proteins that bind and probably mediate the attachment of the 5S RNA into the large ribosomal subunit, where it forms part of the central protuberance. In the 70S ribosome it contacts protein S13 of the 30S subunit (bridge B1b), connecting the 2 subunits; this bridge is implicated in subunit movement. Contacts the P site tRNA; the 5S rRNA and some of its associated proteins might help stabilize positioning of ribosome-bound tRNAs. The polypeptide is Large ribosomal subunit protein uL5 (Anaeromyxobacter dehalogenans (strain 2CP-1 / ATCC BAA-258)).